The sequence spans 99 residues: Large ribosomal subunit protein uL23 (99 aa).

The protein belongs to the universal ribosomal protein uL23 family. In terms of assembly, part of the 50S ribosomal subunit. Contacts protein L29, and trigger factor when it is bound to the ribosome.

In terms of biological role, one of the early assembly proteins it binds 23S rRNA. One of the proteins that surrounds the polypeptide exit tunnel on the outside of the ribosome. Forms the main docking site for trigger factor binding to the ribosome. This Saccharopolyspora erythraea (strain ATCC 11635 / DSM 40517 / JCM 4748 / NBRC 13426 / NCIMB 8594 / NRRL 2338) protein is Large ribosomal subunit protein uL23.